Here is a 780-residue protein sequence, read N- to C-terminus: Kazrin (780 aa).

Residues 79 to 261 (AQVLLREEVV…LATLTKDVPK (183 aa)) are a coiled coil. Residues 295 to 430 (QQTLYHSHPP…TRHSLSLSEG (136 aa)) are disordered. Phosphoserine occurs at positions 357, 372, and 392. Positions 416-427 (SQCSPTRHSLSL) are enriched in polar residues. SAM domains are found at residues 451 to 516 (WKAG…YRDA), 529 to 593 (DHHW…LYQV), and 617 to 684 (WTNQ…STVF). The disordered stretch occupies residues 692 to 780 (IRESERFGTP…EYSSLEVTNV (89 aa)). Residues 760–771 (LQGRPEQCRLEE) are compositionally biased toward basic and acidic residues.

This sequence belongs to the kazrin family.

The protein localises to the cell junction. The protein resides in the nucleus. Its subcellular location is the cytoplasm. It is found in the cytoskeleton. In terms of biological role, component of the cornified envelope of keratinocytes. May be involved in the interplay between adherens junctions and desmosomes. The function in the nucleus is not known. This Rattus norvegicus (Rat) protein is Kazrin (Kazn).